We begin with the raw amino-acid sequence, 277 residues long: Cis-2,3-dihydrobiphenyl-2,3-diol dehydrogenase (277 aa).

An NAD(+)-binding site is contributed by 9–33 (LITGGASGLGRALVDRFVAERAKVA). S142 provides a ligand contact to substrate. Y155 serves as the catalytic Proton acceptor.

Belongs to the short-chain dehydrogenases/reductases (SDR) family. As to quaternary structure, homotetramer.

It carries out the reaction (2R,3S)-3-phenylcyclohexa-3,5-diene-1,2-diol + NAD(+) = biphenyl-2,3-diol + NADH + H(+). The protein operates within xenobiotic degradation; biphenyl degradation; 2-hydroxy-2,4-pentadienoate and benzoate from biphenyl: step 2/4. The polypeptide is Cis-2,3-dihydrobiphenyl-2,3-diol dehydrogenase (bphB) (Pseudomonas putida (Arthrobacter siderocapsulatus)).